A 520-amino-acid chain; its full sequence is NAD(P)H-quinone oxidoreductase subunit 2 (520 aa).

14 consecutive transmembrane segments (helical) span residues 15-35 (ILPEGIVIVTLMGVLIVDLIL), 42-62 (WIGYLAIAGLLAAIVALYFQW), 79-99 (LSIIFRGIIALSAVVTILMSI), 106-126 (GTALAEFIAILLTATLGGMFV), 132-152 (LVMIFISLETLSISSYLLTGY), 167-187 (LLIGASSTAVFLYGVSLLYGL), 210-230 (LGAVIALVFVIAGIGFKISAA), 244-264 (PTPVIAFLSVGSKAAGFALAI), 280-300 (FVFTALAVLSMILGNVVALAQ), 306-326 (MLAYSSIAQAGFVMIGLIAGT), 334-354 (IFYLLVYLFMNLCGFTCIILF), 378-398 (LGLSISLLSLGGIPPLAGFFG), 400-420 (IYLFWAGWQAGLYWLVLLGLV), and 466-486 (VGLVLTLIATSVAGILSNPLF).

It belongs to the complex I subunit 2 family. In terms of assembly, NDH-1 can be composed of about 15 different subunits; different subcomplexes with different compositions have been identified which probably have different functions.

It localises to the cellular thylakoid membrane. The catalysed reaction is a plastoquinone + NADH + (n+1) H(+)(in) = a plastoquinol + NAD(+) + n H(+)(out). It carries out the reaction a plastoquinone + NADPH + (n+1) H(+)(in) = a plastoquinol + NADP(+) + n H(+)(out). Functionally, NDH-1 shuttles electrons from an unknown electron donor, via FMN and iron-sulfur (Fe-S) centers, to quinones in the respiratory and/or the photosynthetic chain. The immediate electron acceptor for the enzyme in this species is believed to be plastoquinone. Couples the redox reaction to proton translocation, and thus conserves the redox energy in a proton gradient. Cyanobacterial NDH-1 also plays a role in inorganic carbon-concentration. The protein is NAD(P)H-quinone oxidoreductase subunit 2 of Trichormus variabilis (strain ATCC 29413 / PCC 7937) (Anabaena variabilis).